The primary structure comprises 158 residues: Cyclic pyranopterin monophosphate synthase (158 aa).

Residues 74-76 (MCH) and 112-113 (ME) each bind substrate. The active site involves Asp-127.

It belongs to the MoaC family. In terms of assembly, homohexamer; trimer of dimers.

The enzyme catalyses (8S)-3',8-cyclo-7,8-dihydroguanosine 5'-triphosphate = cyclic pyranopterin phosphate + diphosphate. The protein operates within cofactor biosynthesis; molybdopterin biosynthesis. Functionally, catalyzes the conversion of (8S)-3',8-cyclo-7,8-dihydroguanosine 5'-triphosphate to cyclic pyranopterin monophosphate (cPMP). This chain is Cyclic pyranopterin monophosphate synthase, found in Helicobacter pylori (strain P12).